Reading from the N-terminus, the 126-residue chain is DNA-directed RNA polymerase subunit omega (126 aa).

Belongs to the RNA polymerase subunit omega family. As to quaternary structure, the RNAP catalytic core consists of 2 alpha, 1 beta, 1 beta' and 1 omega subunit. When a sigma factor is associated with the core the holoenzyme is formed, which can initiate transcription.

The enzyme catalyses RNA(n) + a ribonucleoside 5'-triphosphate = RNA(n+1) + diphosphate. In terms of biological role, promotes RNA polymerase assembly. Latches the N- and C-terminal regions of the beta' subunit thereby facilitating its interaction with the beta and alpha subunits. The sequence is that of DNA-directed RNA polymerase subunit omega from Rickettsia bellii (strain OSU 85-389).